The chain runs to 547 residues: Glucose-6-phosphate isomerase (547 aa).

The Proton donor role is filled by Glu-351. Residues His-382 and Lys-509 contribute to the active site.

This sequence belongs to the GPI family.

The protein localises to the cytoplasm. The enzyme catalyses alpha-D-glucose 6-phosphate = beta-D-fructose 6-phosphate. The protein operates within carbohydrate biosynthesis; gluconeogenesis. Its pathway is carbohydrate degradation; glycolysis; D-glyceraldehyde 3-phosphate and glycerone phosphate from D-glucose: step 2/4. Catalyzes the reversible isomerization of glucose-6-phosphate to fructose-6-phosphate. The chain is Glucose-6-phosphate isomerase from Coxiella burnetii (strain RSA 493 / Nine Mile phase I).